The chain runs to 218 residues: Peptide methionine sulfoxide reductase MsrA (218 aa).

Cys57 is an active-site residue.

It belongs to the MsrA Met sulfoxide reductase family.

It carries out the reaction L-methionyl-[protein] + [thioredoxin]-disulfide + H2O = L-methionyl-(S)-S-oxide-[protein] + [thioredoxin]-dithiol. The catalysed reaction is [thioredoxin]-disulfide + L-methionine + H2O = L-methionine (S)-S-oxide + [thioredoxin]-dithiol. Has an important function as a repair enzyme for proteins that have been inactivated by oxidation. Catalyzes the reversible oxidation-reduction of methionine sulfoxide in proteins to methionine. The polypeptide is Peptide methionine sulfoxide reductase MsrA (Brucella anthropi (Ochrobactrum anthropi)).